The chain runs to 168 residues: Peptidoglycan-associated lipoprotein (168 aa).

Residues 1–21 form the signal peptide; the sequence is MEMLKFGKFAALALAMAVAVG. Cysteine 22 is lipidated: N-palmitoyl cysteine. Cysteine 22 carries the S-diacylglycerol cysteine lipid modification. The 113-residue stretch at 56–168 folds into the OmpA-like domain; it reads SDEAALRAIT…AQNRRVELKK (113 aa). The disordered stretch occupies residues 147-168; that stretch reads RPVATGHDEQSWAQNRRVELKK.

The protein belongs to the Pal lipoprotein family. The Tol-Pal system is composed of five core proteins: the inner membrane proteins TolA, TolQ and TolR, the periplasmic protein TolB and the outer membrane protein Pal. They form a network linking the inner and outer membranes and the peptidoglycan layer.

The protein resides in the cell outer membrane. Its function is as follows. Part of the Tol-Pal system, which plays a role in outer membrane invagination during cell division and is important for maintaining outer membrane integrity. The protein is Peptidoglycan-associated lipoprotein of Pseudomonas aeruginosa (strain ATCC 15692 / DSM 22644 / CIP 104116 / JCM 14847 / LMG 12228 / 1C / PRS 101 / PAO1).